The sequence spans 517 residues: Amidophosphoribosyltransferase (517 aa).

Methionine 1 is modified (N-acetylmethionine). A propeptide spanning residues 1–11 (MELEELGIREE) is cleaved from the precursor. Cysteine 12 serves as the catalytic Nucleophile. One can recognise a Glutamine amidotransferase type-2 domain in the interval 12 to 261 (CGVFGCIASG…PGEIVEISRH (250 aa)). Cysteine 280 lines the [4Fe-4S] cluster pocket. The Mg(2+) site is built by serine 327, aspartate 389, and aspartate 390. [4Fe-4S] cluster is bound by residues cysteine 426, cysteine 503, and cysteine 506.

The protein in the C-terminal section; belongs to the purine/pyrimidine phosphoribosyltransferase family. In terms of assembly, homotetramer. Mg(2+) serves as cofactor. [4Fe-4S] cluster is required as a cofactor.

The catalysed reaction is 5-phospho-beta-D-ribosylamine + L-glutamate + diphosphate = 5-phospho-alpha-D-ribose 1-diphosphate + L-glutamine + H2O. It functions in the pathway purine metabolism; IMP biosynthesis via de novo pathway; N(1)-(5-phospho-D-ribosyl)glycinamide from 5-phospho-alpha-D-ribose 1-diphosphate: step 1/2. Catalyzes the formation of phosphoribosylamine from phosphoribosylpyrophosphate (PRPP) and glutamine. In Mus musculus (Mouse), this protein is Amidophosphoribosyltransferase.